Here is a 164-residue protein sequence, read N- to C-terminus: S-ribosylhomocysteine lyase (164 aa).

Fe cation contacts are provided by His-54, His-58, and Cys-128.

This sequence belongs to the LuxS family. As to quaternary structure, homodimer. Fe cation serves as cofactor.

The enzyme catalyses S-(5-deoxy-D-ribos-5-yl)-L-homocysteine = (S)-4,5-dihydroxypentane-2,3-dione + L-homocysteine. Involved in the synthesis of autoinducer 2 (AI-2) which is secreted by bacteria and is used to communicate both the cell density and the metabolic potential of the environment. The regulation of gene expression in response to changes in cell density is called quorum sensing. Catalyzes the transformation of S-ribosylhomocysteine (RHC) to homocysteine (HC) and 4,5-dihydroxy-2,3-pentadione (DPD). The protein is S-ribosylhomocysteine lyase of Campylobacter jejuni subsp. jejuni serotype O:6 (strain 81116 / NCTC 11828).